The following is a 172-amino-acid chain: Small ribosomal subunit protein uS5 (172 aa).

Residues 17–80 form the S5 DRBM domain; the sequence is FTEKLIKLNR…ERAKRSMVLF (64 aa).

Belongs to the universal ribosomal protein uS5 family. Part of the 30S ribosomal subunit. Contacts proteins S4 and S8.

Its function is as follows. With S4 and S12 plays an important role in translational accuracy. Functionally, located at the back of the 30S subunit body where it stabilizes the conformation of the head with respect to the body. This chain is Small ribosomal subunit protein uS5, found in Treponema pallidum (strain Nichols).